The following is a 355-amino-acid chain: uncharacterized protein (355 aa).

3 helical membrane-spanning segments follow: residues 275–295 (SLIV…FVAF), 301–321 (WNSI…VVGV), and 330–350 (IAST…PLAL).

To M.tuberculosis Rv0497.

The protein resides in the cell membrane. This is an uncharacterized protein from Mycobacterium leprae (strain TN).